We begin with the raw amino-acid sequence, 482 residues long: Thymidine phosphorylase (482 aa).

Positions Met-1–Gly-10 are excised as a propeptide. The segment at Met-1–Leu-36 is disordered. Thr-6 carries the phosphothreonine modification. 4 residues coordinate substrate: His-116, Arg-202, Ser-217, and Lys-221. R-V-A-A-A-L-X(5,6)-L-G-R repeat units follow at residues Arg-265–Arg-279 and Arg-329–Arg-342. 2 R-A-L-X-X-A-L-V-L repeats span residues Arg-393–Leu-401 and Arg-453–Leu-461.

It belongs to the thymidine/pyrimidine-nucleoside phosphorylase family. In terms of assembly, homodimer.

The catalysed reaction is thymidine + phosphate = 2-deoxy-alpha-D-ribose 1-phosphate + thymine. It functions in the pathway pyrimidine metabolism; dTMP biosynthesis via salvage pathway; dTMP from thymine: step 1/2. Functionally, may have a role in maintaining the integrity of the blood vessels. Has growth promoting activity on endothelial cells, angiogenic activity in vivo and chemotactic activity on endothelial cells in vitro. In terms of biological role, catalyzes the reversible phosphorolysis of thymidine. The produced molecules are then utilized as carbon and energy sources or in the rescue of pyrimidine bases for nucleotide synthesis. This Homo sapiens (Human) protein is Thymidine phosphorylase.